A 346-amino-acid chain; its full sequence is Holliday junction branch migration complex subunit RuvB (346 aa).

Over residues 1 to 16 (MSDADRLITPEKRGED) the composition is skewed to basic and acidic residues. A disordered region spans residues 1–23 (MSDADRLITPEKRGEDIDTTLRP). Positions 1–182 (MSDADRLITP…FGIPVRLAFY (182 aa)) are large ATPase domain (RuvB-L). ATP is bound by residues L21, R22, G63, K66, T67, T68, 129–131 (EDF), R172, Y182, and R219. T67 provides a ligand contact to Mg(2+). The interval 183–253 (TVDELELIVR…IADEALTRLL (71 aa)) is small ATPAse domain (RuvB-S). The head domain (RuvB-H) stretch occupies residues 256–346 (NMGLDQLDMR…AQFRLTLEDD (91 aa)). 3 residues coordinate DNA: R292, R311, and R316.

The protein belongs to the RuvB family. As to quaternary structure, homohexamer. Forms an RuvA(8)-RuvB(12)-Holliday junction (HJ) complex. HJ DNA is sandwiched between 2 RuvA tetramers; dsDNA enters through RuvA and exits via RuvB. An RuvB hexamer assembles on each DNA strand where it exits the tetramer. Each RuvB hexamer is contacted by two RuvA subunits (via domain III) on 2 adjacent RuvB subunits; this complex drives branch migration. In the full resolvosome a probable DNA-RuvA(4)-RuvB(12)-RuvC(2) complex forms which resolves the HJ.

It localises to the cytoplasm. It carries out the reaction ATP + H2O = ADP + phosphate + H(+). In terms of biological role, the RuvA-RuvB-RuvC complex processes Holliday junction (HJ) DNA during genetic recombination and DNA repair, while the RuvA-RuvB complex plays an important role in the rescue of blocked DNA replication forks via replication fork reversal (RFR). RuvA specifically binds to HJ cruciform DNA, conferring on it an open structure. The RuvB hexamer acts as an ATP-dependent pump, pulling dsDNA into and through the RuvAB complex. RuvB forms 2 homohexamers on either side of HJ DNA bound by 1 or 2 RuvA tetramers; 4 subunits per hexamer contact DNA at a time. Coordinated motions by a converter formed by DNA-disengaged RuvB subunits stimulates ATP hydrolysis and nucleotide exchange. Immobilization of the converter enables RuvB to convert the ATP-contained energy into a lever motion, pulling 2 nucleotides of DNA out of the RuvA tetramer per ATP hydrolyzed, thus driving DNA branch migration. The RuvB motors rotate together with the DNA substrate, which together with the progressing nucleotide cycle form the mechanistic basis for DNA recombination by continuous HJ branch migration. Branch migration allows RuvC to scan DNA until it finds its consensus sequence, where it cleaves and resolves cruciform DNA. This chain is Holliday junction branch migration complex subunit RuvB, found in Agrobacterium fabrum (strain C58 / ATCC 33970) (Agrobacterium tumefaciens (strain C58)).